A 258-amino-acid polypeptide reads, in one-letter code: Type III pantothenate kinase (258 aa).

6–13 (DAGNTRIK) provides a ligand contact to ATP. Substrate-binding positions include Tyr98 and 105–108 (GSDR). Asp107 functions as the Proton acceptor in the catalytic mechanism. Residue Thr131 participates in ATP binding. Thr184 contributes to the substrate binding site.

This sequence belongs to the type III pantothenate kinase family. In terms of assembly, homodimer. The cofactor is NH4(+). Requires K(+) as cofactor.

The protein localises to the cytoplasm. The enzyme catalyses (R)-pantothenate + ATP = (R)-4'-phosphopantothenate + ADP + H(+). It functions in the pathway cofactor biosynthesis; coenzyme A biosynthesis; CoA from (R)-pantothenate: step 1/5. Catalyzes the phosphorylation of pantothenate (Pan), the first step in CoA biosynthesis. In Herminiimonas arsenicoxydans, this protein is Type III pantothenate kinase.